The primary structure comprises 55 residues: Large ribosomal subunit protein bL33 (55 aa).

Belongs to the bacterial ribosomal protein bL33 family.

The sequence is that of Large ribosomal subunit protein bL33 from Zymomonas mobilis subsp. mobilis (strain ATCC 31821 / ZM4 / CP4).